A 698-amino-acid chain; its full sequence is Elongation factor G (698 aa).

One can recognise a tr-type G domain in the interval 6 to 281 (ENIRNIGICA…AVVDYLPSPI (276 aa)). Residues 15–22 (AHIDAGKT), 79–83 (DTPGH), and 133–136 (NKMD) contribute to the GTP site.

It belongs to the TRAFAC class translation factor GTPase superfamily. Classic translation factor GTPase family. EF-G/EF-2 subfamily.

It is found in the cytoplasm. Catalyzes the GTP-dependent ribosomal translocation step during translation elongation. During this step, the ribosome changes from the pre-translocational (PRE) to the post-translocational (POST) state as the newly formed A-site-bound peptidyl-tRNA and P-site-bound deacylated tRNA move to the P and E sites, respectively. Catalyzes the coordinated movement of the two tRNA molecules, the mRNA and conformational changes in the ribosome. The protein is Elongation factor G of Rickettsia bellii (strain RML369-C).